We begin with the raw amino-acid sequence, 215 residues long: Interleukin-12 subunit alpha (215 aa).

The N-terminal stretch at 1–22 (MCSSRCLLFLATLAFLIHLSLA) is a signal peptide. 3 disulfide bridges follow: Cys33/Cys106, Cys60/Cys192, and Cys81/Cys119. Asn89 carries an N-linked (GlcNAc...) asparagine glycan.

Belongs to the IL-6 superfamily. As to quaternary structure, heterodimer with IL12B; disulfide-linked. This heterodimer is known as interleukin IL-12. Heterodimer with EBI3/IL27B; not disulfide-linked. This heterodimer is known as interleukin IL-35. Interacts with NBR1; this interaction promotes IL-12 secretion.

The protein resides in the secreted. Heterodimerizes with IL12B to form the IL-12 cytokine or with EBI3/IL27B to form the IL-35 cytokine. IL-12 is primarily produced by professional antigen-presenting cells (APCs) such as B-cells and dendritic cells (DCs) as well as macrophages and granulocytes and regulates T-cell and natural killer-cell responses, induces the production of interferon-gamma (IFN-gamma), favors the differentiation of T-helper 1 (Th1) cells and is an important link between innate resistance and adaptive immunity. Mechanistically, exerts its biological effects through a receptor composed of IL12R1 and IL12R2 subunits. Binding to the receptor results in the rapid tyrosine phosphorylation of a number of cellular substrates including the JAK family kinases TYK2 and JAK2. In turn, recruited STAT4 gets phosphorylated and translocates to the nucleus where it regulates cytokine/growth factor responsive genes. As part of IL-35, plays essential roles in maintaining the immune homeostasis of the liver microenvironment and also functions as an immune-suppressive cytokine. Mediates biological events through unconventional receptors composed of IL12RB2 and gp130/IL6ST heterodimers or homodimers. Signaling requires the transcription factors STAT1 and STAT4, which form a unique heterodimer that binds to distinct DNA sites. The chain is Interleukin-12 subunit alpha (IL12A) from Sigmodon hispidus (Hispid cotton rat).